A 216-amino-acid chain; its full sequence is Lipoprotein-releasing system ATP-binding protein LolD (216 aa).

The region spanning 2–216 (IHLEGITKSF…TIHMVDGNII (215 aa)) is the ABC transporter domain. 34–41 (GPSGAGKT) serves as a coordination point for ATP.

Belongs to the ABC transporter superfamily. Lipoprotein translocase (TC 3.A.1.125) family. The complex is composed of two ATP-binding proteins (LolD) and two transmembrane proteins (LolC and LolE).

It localises to the cell inner membrane. In terms of biological role, part of the ABC transporter complex LolCDE involved in the translocation of mature outer membrane-directed lipoproteins, from the inner membrane to the periplasmic chaperone, LolA. Responsible for the formation of the LolA-lipoprotein complex in an ATP-dependent manner. The sequence is that of Lipoprotein-releasing system ATP-binding protein LolD from Bacteroides fragilis (strain YCH46).